A 129-amino-acid chain; its full sequence is Small ribosomal subunit protein uS11 (129 aa).

It belongs to the universal ribosomal protein uS11 family. In terms of assembly, part of the 30S ribosomal subunit. Interacts with proteins S7 and S18. Binds to IF-3.

Located on the platform of the 30S subunit, it bridges several disparate RNA helices of the 16S rRNA. Forms part of the Shine-Dalgarno cleft in the 70S ribosome. This Rhizorhabdus wittichii (strain DSM 6014 / CCUG 31198 / JCM 15750 / NBRC 105917 / EY 4224 / RW1) (Sphingomonas wittichii) protein is Small ribosomal subunit protein uS11.